A 346-amino-acid polypeptide reads, in one-letter code: Phosphate acyltransferase (346 aa).

This sequence belongs to the PlsX family. As to quaternary structure, homodimer. Probably interacts with PlsY.

It is found in the cytoplasm. The catalysed reaction is a fatty acyl-[ACP] + phosphate = an acyl phosphate + holo-[ACP]. The protein operates within lipid metabolism; phospholipid metabolism. Its function is as follows. Catalyzes the reversible formation of acyl-phosphate (acyl-PO(4)) from acyl-[acyl-carrier-protein] (acyl-ACP). This enzyme utilizes acyl-ACP as fatty acyl donor, but not acyl-CoA. The sequence is that of Phosphate acyltransferase from Pelobacter propionicus (strain DSM 2379 / NBRC 103807 / OttBd1).